The chain runs to 370 residues: Histidinol-phosphate aminotransferase 3 (370 aa).

An N6-(pyridoxal phosphate)lysine modification is found at K233.

Belongs to the class-II pyridoxal-phosphate-dependent aminotransferase family. Histidinol-phosphate aminotransferase subfamily. As to quaternary structure, homodimer. The cofactor is pyridoxal 5'-phosphate.

It catalyses the reaction L-histidinol phosphate + 2-oxoglutarate = 3-(imidazol-4-yl)-2-oxopropyl phosphate + L-glutamate. Its pathway is amino-acid biosynthesis; L-histidine biosynthesis; L-histidine from 5-phospho-alpha-D-ribose 1-diphosphate: step 7/9. This is Histidinol-phosphate aminotransferase 3 from Burkholderia lata (strain ATCC 17760 / DSM 23089 / LMG 22485 / NCIMB 9086 / R18194 / 383).